The primary structure comprises 379 residues: 3-isopropylmalate dehydrogenase 1 (379 aa).

Positions 101, 111, 139, and 230 each coordinate substrate. Mg(2+)-binding residues include D230, D254, and D258. Position 293–305 (293–305) interacts with NAD(+); the sequence is GSAPDIAGKGIAN.

Belongs to the isocitrate and isopropylmalate dehydrogenases family. LeuB type 1 subfamily. Homodimer. Mg(2+) is required as a cofactor. Mn(2+) serves as cofactor.

The protein resides in the cytoplasm. It carries out the reaction (2R,3S)-3-isopropylmalate + NAD(+) = 4-methyl-2-oxopentanoate + CO2 + NADH. Its pathway is amino-acid biosynthesis; L-leucine biosynthesis; L-leucine from 3-methyl-2-oxobutanoate: step 3/4. Its function is as follows. Catalyzes the oxidation of 3-carboxy-2-hydroxy-4-methylpentanoate (3-isopropylmalate) to 3-carboxy-4-methyl-2-oxopentanoate. The product decarboxylates to 4-methyl-2 oxopentanoate. The sequence is that of 3-isopropylmalate dehydrogenase 1 from Bradyrhizobium diazoefficiens (strain JCM 10833 / BCRC 13528 / IAM 13628 / NBRC 14792 / USDA 110).